We begin with the raw amino-acid sequence, 79 residues long: Protein OPG081 (79 aa).

Topologically, residues 2 to 8 (VDAITVL) are intravirion. Residues 9-29 (TAIGITVLMLLMVISGAALIV) form a helical membrane-spanning segment. The Virion surface segment spans residues 30-47 (KELNPNDIFTMQSLKFNR). The helical transmembrane segment at 48–68 (AVTIFKYIGLFIYIPGTIILY) threads the bilayer. Topologically, residues 69-79 (ATYVKSLLMKS) are intravirion.

Belongs to the orthopoxvirus OPG081 family.

The protein localises to the virion membrane. Its function is as follows. Envelope protein. This chain is Protein OPG081 (OPG081), found in Vaccinia virus (strain Western Reserve) (VACV).